A 496-amino-acid polypeptide reads, in one-letter code: Glycine receptor subunit beta (496 aa).

An N-terminal signal peptide occupies residues M1–S22. The Extracellular segment spans residues K23–F268. N-linked (GlcNAc...) asparagine glycosylation is present at N54. Glycine is bound by residues R108 and S174. C183 and C197 are oxidised to a cystine. N242 carries N-linked (GlcNAc...) asparagine glycosylation. C243 and C255 are oxidised to a cystine. T250 serves as a coordination point for glycine. Residues Y269 to W289 traverse the membrane as a helical segment. At I290–A294 the chain is on the cytoplasmic side. A helical transmembrane segment spans residues S295 to T315. Residues L316–K327 lie on the Extracellular side of the membrane. A helical transmembrane segment spans residues A328–V349. Residues V350 to R471 are Cytoplasmic-facing. T391 carries the post-translational modification Phosphothreonine. Residues I472–Y495 traverse the membrane as a helical segment. A topological domain (extracellular) is located at residue L496.

Belongs to the ligand-gated ion channel (TC 1.A.9) family. Glycine receptor (TC 1.A.9.3) subfamily. GLRB sub-subfamily. In terms of assembly, forms heteropentamers with glycin receptor alpha subunits. Heteropentamers with GLRA1 can be composed of two GLRA1 and three GLRB subunits, or three GLRA1 and two GLRB subunits, or four GLRA1 subunits and one GLRB subunit. Forms heteropentamers with GLRA2. Functional GLRB-GLRA2 heteropentamers contain four GLRA2 subunits and one GLRB subunit, although alternative subunit composition cannot be excluded. Forms a heteropentamer with GLRA3. Interacts with GPHN. As to expression, detected in spinal cord and brain stem (at protein level). Detected in spinal cord, cerebellum and brain cortex.

It is found in the postsynaptic cell membrane. Its subcellular location is the cell membrane. It localises to the synapse. The protein localises to the perikaryon. The protein resides in the cell projection. It is found in the dendrite. Its subcellular location is the cytoplasm. It catalyses the reaction chloride(in) = chloride(out). With respect to regulation, channel opening is triggered by extracellular glycine. Heteropentameric channels composed of GLRB and GLRA1 are activated by lower glycine levels than homopentameric GLRA1. Subunit of heteromeric glycine-gated chloride channels. Plays an important role in the down-regulation of neuronal excitability. Contributes to the generation of inhibitory postsynaptic currents. In Rattus norvegicus (Rat), this protein is Glycine receptor subunit beta (Glrb).